Consider the following 635-residue polypeptide: 1-deoxy-D-xylulose-5-phosphate synthase (635 aa).

Thiamine diphosphate is bound by residues histidine 77 and 118–120 (GHA). Aspartate 149 provides a ligand contact to Mg(2+). Thiamine diphosphate contacts are provided by residues 150–151 (GS), asparagine 178, phenylalanine 290, and glutamate 375. Asparagine 178 is a Mg(2+) binding site.

Belongs to the transketolase family. DXPS subfamily. As to quaternary structure, homodimer. Mg(2+) is required as a cofactor. Requires thiamine diphosphate as cofactor.

The catalysed reaction is D-glyceraldehyde 3-phosphate + pyruvate + H(+) = 1-deoxy-D-xylulose 5-phosphate + CO2. It functions in the pathway metabolic intermediate biosynthesis; 1-deoxy-D-xylulose 5-phosphate biosynthesis; 1-deoxy-D-xylulose 5-phosphate from D-glyceraldehyde 3-phosphate and pyruvate: step 1/1. Its function is as follows. Catalyzes the acyloin condensation reaction between C atoms 2 and 3 of pyruvate and glyceraldehyde 3-phosphate to yield 1-deoxy-D-xylulose-5-phosphate (DXP). The protein is 1-deoxy-D-xylulose-5-phosphate synthase of Chlorobium phaeovibrioides (strain DSM 265 / 1930) (Prosthecochloris vibrioformis (strain DSM 265)).